Consider the following 359-residue polypeptide: Biotin synthase (359 aa).

The tract at residues 1-23 (MSVADSSAADSVAAPDTADTSSS) is disordered. The Radical SAM core domain occupies 76 to 302 (YFGNTVQLYF…VNPDRELRIA (227 aa)). 3 residues coordinate [4Fe-4S] cluster: C94, C98, and C101. [2Fe-2S] cluster-binding residues include C138, C170, C230, and R300.

It belongs to the radical SAM superfamily. Biotin synthase family. In terms of assembly, homodimer. [4Fe-4S] cluster serves as cofactor. Requires [2Fe-2S] cluster as cofactor.

The catalysed reaction is (4R,5S)-dethiobiotin + (sulfur carrier)-SH + 2 reduced [2Fe-2S]-[ferredoxin] + 2 S-adenosyl-L-methionine = (sulfur carrier)-H + biotin + 2 5'-deoxyadenosine + 2 L-methionine + 2 oxidized [2Fe-2S]-[ferredoxin]. Its pathway is cofactor biosynthesis; biotin biosynthesis; biotin from 7,8-diaminononanoate: step 2/2. In terms of biological role, catalyzes the conversion of dethiobiotin (DTB) to biotin by the insertion of a sulfur atom into dethiobiotin via a radical-based mechanism. This Rhodopirellula baltica (strain DSM 10527 / NCIMB 13988 / SH1) protein is Biotin synthase.